The following is a 344-amino-acid chain: UDP-3-O-acylglucosamine N-acyltransferase (344 aa).

His-248 functions as the Proton acceptor in the catalytic mechanism.

This sequence belongs to the transferase hexapeptide repeat family. LpxD subfamily. As to quaternary structure, homotrimer.

The enzyme catalyses a UDP-3-O-[(3R)-3-hydroxyacyl]-alpha-D-glucosamine + a (3R)-hydroxyacyl-[ACP] = a UDP-2-N,3-O-bis[(3R)-3-hydroxyacyl]-alpha-D-glucosamine + holo-[ACP] + H(+). The protein operates within bacterial outer membrane biogenesis; LPS lipid A biosynthesis. In terms of biological role, catalyzes the N-acylation of UDP-3-O-acylglucosamine using 3-hydroxyacyl-ACP as the acyl donor. Is involved in the biosynthesis of lipid A, a phosphorylated glycolipid that anchors the lipopolysaccharide to the outer membrane of the cell. The polypeptide is UDP-3-O-acylglucosamine N-acyltransferase (Synechocystis sp. (strain ATCC 27184 / PCC 6803 / Kazusa)).